The following is a 356-amino-acid chain: Nucleotide-binding protein GDI1189/Gdia_1902 (356 aa).

20–27 provides a ligand contact to ATP; it reads GLSGAGKS. Position 65–68 (65–68) interacts with GTP; sequence DSRT. Residues 285-313 form a disordered region; it reads EPGGTCDSPGKPAHIEKGAAPTDVQSGGA.

It belongs to the RapZ-like family.

Functionally, displays ATPase and GTPase activities. This is Nucleotide-binding protein GDI1189/Gdia_1902 from Gluconacetobacter diazotrophicus (strain ATCC 49037 / DSM 5601 / CCUG 37298 / CIP 103539 / LMG 7603 / PAl5).